The chain runs to 317 residues: Melanocyte-stimulating hormone receptor (317 aa).

Residues methionine 1–glutamate 37 are Extracellular-facing. Residue asparagine 29 is glycosylated (N-linked (GlcNAc...) asparagine). Residues valine 38 to isoleucine 63 traverse the membrane as a helical segment. The Cytoplasmic portion of the chain corresponds to alanine 64–proline 72. Residues methionine 73–leucine 93 form a helical membrane-spanning segment. Over glutamate 94 to asparagine 118 the chain is Extracellular. A helical transmembrane segment spans residues valine 119 to valine 140. The Cytoplasmic portion of the chain corresponds to aspartate 141–arginine 163. Residues isoleucine 164–tyrosine 183 traverse the membrane as a helical segment. At asparagine 184–cysteine 191 the chain is on the extracellular side. Residues leucine 192–leucine 211 form a helical membrane-spanning segment. Topologically, residues alanine 212–alanine 240 are cytoplasmic. A helical membrane pass occupies residues alanine 241 to leucine 266. The Extracellular portion of the chain corresponds to cysteine 267 to asparagine 279. A helical transmembrane segment spans residues phenylalanine 280–phenylalanine 300. Residues arginine 301–tryptophan 317 lie on the Cytoplasmic side of the membrane. Cysteine 315 is lipidated: S-palmitoyl cysteine.

It belongs to the G-protein coupled receptor 1 family. Interacts with MGRN1, but does not undergo MGRN1-mediated ubiquitination; this interaction competes with GNAS-binding and thus inhibits agonist-induced cAMP production. Interacts with OPN3; the interaction results in a decrease in MC1R-mediated cAMP signaling and ultimately a decrease in melanin production in melanocytes.

Its subcellular location is the cell membrane. Receptor for MSH (alpha, beta and gamma) and ACTH. The activity of this receptor is mediated by G proteins which activate adenylate cyclase. Mediates melanogenesis, the production of eumelanin (black/brown) and phaeomelanin (red/yellow), via regulation of cAMP signaling in melanocytes. The sequence is that of Melanocyte-stimulating hormone receptor (MC1R) from Cervus elaphus (Red deer).